We begin with the raw amino-acid sequence, 108 residues long: UPF0235 protein RPB_0109 (108 aa).

It belongs to the UPF0235 family.

This is UPF0235 protein RPB_0109 from Rhodopseudomonas palustris (strain HaA2).